Here is a 644-residue protein sequence, read N- to C-terminus: ATP-dependent zinc metalloprotease FtsH (644 aa).

Over 1–4 (MAKN) the chain is Cytoplasmic. Residues 5-25 (LILWLVIAVVLMSVFQSFGPS) traverse the membrane as a helical segment. The Periplasmic portion of the chain corresponds to 26-98 (ESNGRKVDYS…VGEPPEEPSL (73 aa)). The chain crosses the membrane as a helical span at residues 99 to 119 (LASIFISWFPMLLLIGVWIFF). Over 120–644 (MRQMQGGGGK…NTMSEQLGDK (525 aa)) the chain is Cytoplasmic. ATP is bound at residue 192 to 199 (GPPGTGKT). Zn(2+) is bound at residue His-414. Residue Glu-415 is part of the active site. His-418 and Asp-492 together coordinate Zn(2+). The segment at 598 to 644 (VRPPAGWEEPGASNNAGDNGSPKAPRPVDEPRTPNPGNTMSEQLGDK) is disordered. Residues 632–644 (NPGNTMSEQLGDK) show a composition bias toward polar residues.

The protein in the central section; belongs to the AAA ATPase family. This sequence in the C-terminal section; belongs to the peptidase M41 family. As to quaternary structure, homohexamer. Zn(2+) serves as cofactor.

The protein localises to the cell inner membrane. Acts as a processive, ATP-dependent zinc metallopeptidase for both cytoplasmic and membrane proteins. Plays a role in the quality control of integral membrane proteins. In Escherichia coli O157:H7, this protein is ATP-dependent zinc metalloprotease FtsH.